The primary structure comprises 404 residues: RING-H2 finger protein ATL11 (404 aa).

Residues Met1 to Gly36 form the signal peptide. A helical membrane pass occupies residues Ala64 to Ile84. An RING-type; atypical zinc finger spans residues Cys144–Arg186. 2 disordered regions span residues Pro339–Ser361 and Val385–Val404.

This sequence belongs to the RING-type zinc finger family. ATL subfamily.

Its subcellular location is the membrane. It catalyses the reaction S-ubiquitinyl-[E2 ubiquitin-conjugating enzyme]-L-cysteine + [acceptor protein]-L-lysine = [E2 ubiquitin-conjugating enzyme]-L-cysteine + N(6)-ubiquitinyl-[acceptor protein]-L-lysine.. It participates in protein modification; protein ubiquitination. The protein is RING-H2 finger protein ATL11 (ATL11) of Arabidopsis thaliana (Mouse-ear cress).